The sequence spans 146 residues: Hemoglobin subunit beta-0 (146 aa).

The 145-residue stretch at 2–146 (EWTDFERATI…VVSSLGRQYH (145 aa)) folds into the Globin domain. His-63 and His-92 together coordinate heme b.

The protein belongs to the globin family. Heterotetramer of two alpha chains and two beta chains. As to expression, red blood cells.

In terms of biological role, involved in oxygen transport from gills to the various peripheral tissues. This Pagothenia borchgrevinki (Bald rockcod) protein is Hemoglobin subunit beta-0 (hbb0).